Reading from the N-terminus, the 470-residue chain is ATP synthase subunit beta (470 aa).

157 to 164 is a binding site for ATP; the sequence is GGAGVGKT.

This sequence belongs to the ATPase alpha/beta chains family. As to quaternary structure, F-type ATPases have 2 components, CF(1) - the catalytic core - and CF(0) - the membrane proton channel. CF(1) has five subunits: alpha(3), beta(3), gamma(1), delta(1), epsilon(1). CF(0) has three main subunits: a(1), b(2) and c(9-12). The alpha and beta chains form an alternating ring which encloses part of the gamma chain. CF(1) is attached to CF(0) by a central stalk formed by the gamma and epsilon chains, while a peripheral stalk is formed by the delta and b chains.

The protein localises to the cell inner membrane. It carries out the reaction ATP + H2O + 4 H(+)(in) = ADP + phosphate + 5 H(+)(out). In terms of biological role, produces ATP from ADP in the presence of a proton gradient across the membrane. The catalytic sites are hosted primarily by the beta subunits. This chain is ATP synthase subunit beta, found in Geotalea uraniireducens (strain Rf4) (Geobacter uraniireducens).